The sequence spans 488 residues: Ribulose bisphosphate carboxylase large chain (488 aa).

Asn127 and Thr177 together coordinate substrate. Lys179 (proton acceptor) is an active-site residue. Lys181 provides a ligand contact to substrate. Residues Lys205, Asp207, and Glu208 each contribute to the Mg(2+) site. The residue at position 205 (Lys205) is an N6-carboxylysine. His297 serves as the catalytic Proton acceptor. Residues Arg298, His330, and Ser382 each contribute to the substrate site.

This sequence belongs to the RuBisCO large chain family. Type I subfamily. Heterohexadecamer of 8 large chains and 8 small chains. Mg(2+) serves as cofactor.

Its subcellular location is the plastid. The protein localises to the chloroplast. It catalyses the reaction 2 (2R)-3-phosphoglycerate + 2 H(+) = D-ribulose 1,5-bisphosphate + CO2 + H2O. The catalysed reaction is D-ribulose 1,5-bisphosphate + O2 = 2-phosphoglycolate + (2R)-3-phosphoglycerate + 2 H(+). Its function is as follows. RuBisCO catalyzes two reactions: the carboxylation of D-ribulose 1,5-bisphosphate, the primary event in carbon dioxide fixation, as well as the oxidative fragmentation of the pentose substrate in the photorespiration process. Both reactions occur simultaneously and in competition at the same active site. In Porphyridium aerugineum (Red microalga), this protein is Ribulose bisphosphate carboxylase large chain.